The sequence spans 841 residues: Axin-1 (841 aa).

The segment at 1-78 (MNIQGKGFPL…GYEPEGSASP (78 aa)) is disordered. A compositionally biased stretch (polar residues) spans 44–61 (FYSSKSDAVRNETSTATP). The RGS domain occupies 88 to 211 (SLHSLLDDQD…LKSDIYLEYT (124 aa)). The segment at 217–269 (SPKIYSDPSSGSGTGKGLPGYLPTLNEDEEWKCDQDTEPEASRDSAPSSRLTQ) is disordered. The span at 248–259 (KCDQDTEPEASR) shows a compositional bias: basic and acidic residues. Positions 348–433 (LRKQHRREMQ…DADISSGPSV (86 aa)) are interaction with GSK3B. The segment at 434-508 (ISHKMPSAQP…RSPESGHLGK (75 aa)) is interaction with beta-catenin. 3 disordered regions span residues 482 to 527 (KTPG…TTKS), 613 to 635 (NIKK…SPED), and 727 to 756 (RRLE…SGAS). A compositionally biased stretch (basic and acidic residues) spans 727 to 736 (RRLEEEEKRA). The 83-residue stretch at 759-841 (CENIVVAYYF…KIIGKVEKID (83 aa)) folds into the DIX domain.

In terms of assembly, homodimer. ADP-ribosylated by tankyrase TNKS and TNKS2. Poly-ADP-ribosylated protein is recognized by RNF146, followed by ubiquitination at 'Lys-48' and subsequent activation of the Wnt signaling pathway. In terms of processing, ubiquitinated by RNF146 when poly-ADP-ribosylated, leading to its degradation and subsequent activation of the Wnt signaling pathway.

Its subcellular location is the cytoplasm. It localises to the nucleus. The protein resides in the membrane. The protein localises to the cell membrane. Component of the beta-catenin destruction complex required for regulating CTNNB1 levels through phosphorylation and ubiquitination, and modulating Wnt-signaling. Controls dorsoventral patterning via two opposing effects; down-regulates CTNNB1 to inhibit the Wnt signaling pathway and ventralize embryos, but also dorsalizes embryos by activating a Wnt-independent JNK signaling pathway. The polypeptide is Axin-1 (AXIN1) (Gallus gallus (Chicken)).